The sequence spans 488 residues: Histone deacetylase 2 (488 aa).

The tract at residues 9 to 322 (KKKVCYYYDG…WTYETAVALD (314 aa)) is histone deacetylase. 1D-myo-inositol 1,4,5,6-tetrakisphosphate-binding residues include G28 and K32. K75 carries the post-translational modification N6-acetyllysine; alternate. K75 is covalently cross-linked (Glycyl lysine isopeptide (Lys-Gly) (interchain with G-Cter in SUMO2); alternate). H142 is an active-site residue. 8 residues coordinate Ca(2+): D175, D177, H179, F188, T191, V194, S198, and F199. The Zn(2+) site is built by D177 and H179. Residue K221 is modified to N6-acetyllysine. Y223 lines the Ca(2+) pocket. S-nitrosocysteine is present on C262. D265 contributes to the Zn(2+) binding site. R271 is a 1D-myo-inositol 1,4,5,6-tetrakisphosphate binding site. C274 is subject to S-nitrosocysteine. The disordered stretch occupies residues 389–488 (AVHEDSGDED…GTKSEQLSNP (100 aa)). A phosphoserine mark is found at S394, S407, S422, and S424. Residues 402-417 (PDKRISIRASDKRIAC) show a composition bias toward basic and acidic residues. The segment covering 418–428 (DEEFSDSEDEG) has biased composition (acidic residues). Residues 429–481 (EGGRRNVADHKKGAKKARIEEDKKETEDKKTDVKEEDKSKDNSGEKTDTKGTK) are compositionally biased toward basic and acidic residues. Residues K439, K452, K458, K462, K478, and K481 each participate in a glycyl lysine isopeptide (Lys-Gly) (interchain with G-Cter in SUMO2) cross-link.

This sequence belongs to the histone deacetylase family. HD type 1 subfamily. As to quaternary structure, part of the core histone deacetylase (HDAC) complex composed of HDAC1, HDAC2, RBBP4 and RBBP7, the core complex associates with SIN3, SAP18 and SAP30 to form the SIN3 HDAC complex. Component of the nucleosome remodeling and deacetylase (NuRD) repressor complex, composed of core proteins MTA1, MTA2, MTA3, RBBP4, RBBP7, HDAC1, HDAC2, MBD2, MBD3, and peripherally associated proteins CDK2AP1, CDK2AP2, GATAD2A, GATAD2B, CHD3, CHD4 and CHD5. The exact stoichiometry of the NuRD complex is unknown, and some subunits such as MBD2 and MBD3, GATAD2A and GATAD2B, and CHD3, CHD4 and CHD5 define mutually exclusive NuRD complexes. Component of a RCOR/GFI/KDM1A/HDAC complex. Component of a BHC histone deacetylase complex that contains HDAC1, HDAC2, HMG20B, KDM1A, RCOR1 and PHF21A. The BHC complex may also contain ZMYM2, ZNF217, ZMYM3, GSE1 and GTF2I. Part of a complex containing the core histones H2A, H2B, H3 and H4, DEK and unphosphorylated DAXX. Part of a complex containing ATR and CHD4. Forms a heterologous complex at least with YY1. Interacts in the late S-phase of DNA-replication with DNMT1 in the other transcriptional repressor complex composed of DNMT1, DMAP1, PCNA, CAF1. Component of a mSin3A corepressor complex that contains SIN3A, SAP130, SUDS3, ARID4B, HDAC1 and HDAC2. Part of a complex composed of TRIM28, HDAC1, HDAC2 and EHMT2. Part of a complex containing at least CDYL, MIER1, MIER2, HDAC1 and HDAC2. Component of a histone deacetylase complex containing DNTTIP1, ZNF541, HDAC1 and HDAC2. Forms a complex comprising APPL1, RUVBL2, APPL2, CTNNB1 and HDAC1. Interacts directly with GFI1. Interacts directly with GFI1B. Interacts with APEX1; the interaction is not dependent on the acetylated status of APEX1. Interacts with ATR. Interacts with BCL6 (non-acetylated form). Interacts with BEND3. Interacts with CBFA2T3. Interacts with CDK2AP1. Interacts with CHD4. Interacts with CHD5. Interacts with CHFR. Interacts with CRY1. Interacts with DNMT1. Interacts with GATAD2A. Interacts with HCFC1. Interacts with HDAC7. Interacts with HDAC10. Interacts with INSM1. Interacts with KDM4A. Interacts with MACROH2A1 (via the non-histone region). Interacts with MBD3L2. Interacts with MTA1, with a preference for sumoylated MTA1. Interacts with NACC2. Interacts with NRIP1. Interacts with PELP1. Interacts with PIMREG. Interacts with PRDM6. Interacts with PWWP2B. Interacts with SAP30. Interacts with SAP30L. Interacts with SETDB1. Interacts with SIX3. Interacts with SMARCAD1. Interacts with SNW1. Interacts with SPHK2. Interacts with SPEN/MINT. Interacts (CK2 phosphorylated form) with SP3. Interacts with SUV39H1. Interacts with TSHZ3 (via its N-terminus). Interacts with ZMYND8. Interacts with ZNF431. Interacts with ZNF263; recruited to the SIX3 promoter along with other proteins involved in chromatin modification and transcriptional corepression where it contributes to transcriptional repression. Identified in a complex with HDAC1, KCTD19, DNTTIP1 and ZNF541. Component of the SIN3B complex, which includes SIN3B, HDAC2, PHF12 and MORF4L1; interacts directly with all subunits. It depends on Zn(2+) as a cofactor. Requires Ca(2+) as cofactor. S-nitrosylated by GAPDH. In neurons, S-nitrosylation at Cys-262 and Cys-274 does not affect enzyme activity, but induces HDAC2 release from chromatin. This in turn increases acetylation of histones surrounding neurotrophin-dependent gene promoters and promotes their transcription. In embryonic cortical neurons, S-Nitrosylation regulates dendritic growth and branching. In terms of tissue distribution, widely expressed; lower levels in brain and lung.

It localises to the nucleus. Its subcellular location is the cytoplasm. It catalyses the reaction N(6)-acetyl-L-lysyl-[histone] + H2O = L-lysyl-[histone] + acetate. The catalysed reaction is N(6)-acetyl-L-lysyl-[protein] + H2O = L-lysyl-[protein] + acetate. The enzyme catalyses N(6)-(2E)-butenoyl-L-lysyl-[protein] + H2O = (2E)-2-butenoate + L-lysyl-[protein]. It carries out the reaction N(6)-(2-hydroxyisobutanoyl)-L-lysyl-[protein] + H2O = 2-hydroxy-2-methylpropanoate + L-lysyl-[protein]. It catalyses the reaction N(6)-[(S)-lactoyl]-L-lysyl-[protein] + H2O = (S)-lactate + L-lysyl-[protein]. With respect to regulation, inositol tetraphosphate (1D-myo-inositol 1,4,5,6-tetrakisphosphate) may act as an intermolecular glue between HDAC2 and N-Cor repressor complex components. Histone deacetylase that catalyzes the deacetylation of lysine residues on the N-terminal part of the core histones (H2A, H2B, H3 and H4). Histone deacetylation gives a tag for epigenetic repression and plays an important role in transcriptional regulation, cell cycle progression and developmental events. Histone deacetylases act via the formation of large multiprotein complexes. Forms transcriptional repressor complexes by associating with MAD, SIN3, YY1 and N-COR. Component of a RCOR/GFI/KDM1A/HDAC complex that suppresses, via histone deacetylase (HDAC) recruitment, a number of genes implicated in multilineage blood cell development. Acts as a component of the histone deacetylase NuRD complex which participates in the remodeling of chromatin. Component of the SIN3B complex that represses transcription and counteracts the histone acetyltransferase activity of EP300 through the recognition H3K27ac marks by PHF12 and the activity of the histone deacetylase HDAC2. Also deacetylates non-histone targets: deacetylates TSHZ3, thereby regulating its transcriptional repressor activity. May be involved in the transcriptional repression of circadian target genes, such as PER1, mediated by CRY1 through histone deacetylation. Involved in MTA1-mediated transcriptional corepression of TFF1 and CDKN1A. In addition to protein deacetylase activity, also acts as a protein-lysine deacylase by recognizing other acyl groups: catalyzes removal of (2E)-butenoyl (crotonyl), lactoyl (lactyl) and 2-hydroxyisobutanoyl (2-hydroxyisobutyryl) acyl groups from lysine residues, leading to protein decrotonylation, delactylation and de-2-hydroxyisobutyrylation, respectively. This Homo sapiens (Human) protein is Histone deacetylase 2.